The chain runs to 100 residues: MIPLQHGLILAAILFALGLTGLLIRRNLLFMLISLEIMINAAALAFVVAGSVWGQADGQVMYILAISLAAAEASIGLALLLQLHRRRNTLNIDTVSEMRG.

Transmembrane regions (helical) follow at residues Leu-4–Ile-24, Leu-28–Val-48, and Val-60–Leu-80.

It belongs to the complex I subunit 4L family. In terms of assembly, NDH-1 is composed of 13 different subunits. Subunits NuoA, H, J, K, L, M, N constitute the membrane sector of the complex.

It localises to the cell inner membrane. The catalysed reaction is a quinone + NADH + 5 H(+)(in) = a quinol + NAD(+) + 4 H(+)(out). In terms of biological role, NDH-1 shuttles electrons from NADH, via FMN and iron-sulfur (Fe-S) centers, to quinones in the respiratory chain. The immediate electron acceptor for the enzyme in this species is believed to be ubiquinone. Couples the redox reaction to proton translocation (for every two electrons transferred, four hydrogen ions are translocated across the cytoplasmic membrane), and thus conserves the redox energy in a proton gradient. The chain is NADH-quinone oxidoreductase subunit K from Edwardsiella ictaluri (strain 93-146).